A 123-amino-acid chain; its full sequence is MENSLFKKSEKKIRRALRVRKVLRGSSLKPRLSVVKTNKHIYVQLIDDSIGKTLASVSTMAKSSKASGLTKKNQDVAKALGSKIAELGKNLQVDRVVFDRGPFKYHGVIAMVADGAREGGLQF.

Belongs to the universal ribosomal protein uL18 family. In terms of assembly, part of the 50S ribosomal subunit; part of the 5S rRNA/L5/L18/L25 subcomplex. Contacts the 5S and 23S rRNAs.

Its function is as follows. This is one of the proteins that bind and probably mediate the attachment of the 5S RNA into the large ribosomal subunit, where it forms part of the central protuberance. This is Large ribosomal subunit protein uL18 from Chlamydia felis (strain Fe/C-56) (Chlamydophila felis).